The following is an 81-amino-acid chain: ATP synthase subunit c, chloroplastic (81 aa).

Transmembrane regions (helical) follow at residues 3 to 23 and 57 to 77; these read PLIA…ASIG and LAFM…LLFA.

It belongs to the ATPase C chain family. F-type ATPases have 2 components, F(1) - the catalytic core - and F(0) - the membrane proton channel. F(1) has five subunits: alpha(3), beta(3), gamma(1), delta(1), epsilon(1). F(0) has four main subunits: a(1), b(1), b'(1) and c(10-14). The alpha and beta chains form an alternating ring which encloses part of the gamma chain. F(1) is attached to F(0) by a central stalk formed by the gamma and epsilon chains, while a peripheral stalk is formed by the delta, b and b' chains.

It localises to the plastid. Its subcellular location is the chloroplast thylakoid membrane. Functionally, f(1)F(0) ATP synthase produces ATP from ADP in the presence of a proton or sodium gradient. F-type ATPases consist of two structural domains, F(1) containing the extramembraneous catalytic core and F(0) containing the membrane proton channel, linked together by a central stalk and a peripheral stalk. During catalysis, ATP synthesis in the catalytic domain of F(1) is coupled via a rotary mechanism of the central stalk subunits to proton translocation. Key component of the F(0) channel; it plays a direct role in translocation across the membrane. A homomeric c-ring of between 10-14 subunits forms the central stalk rotor element with the F(1) delta and epsilon subunits. The polypeptide is ATP synthase subunit c, chloroplastic (Pisum sativum (Garden pea)).